Here is a 257-residue protein sequence, read N- to C-terminus: High affinity immunoglobulin epsilon receptor subunit alpha (257 aa).

The N-terminal stretch at 1-25 (MAPAMESPTLLCVALLFFAPDGVLA) is a signal peptide. At 26 to 205 (VPQKPKVSLN…KAPREKYWLQ (180 aa)) the chain is on the extracellular side. 2 Ig-like domains span residues 30 to 110 (PKVS…EVFS) and 111 to 193 (DWLL…LNIT). 7 N-linked (GlcNAc...) asparagine glycosylation sites follow: Asn-46, Asn-67, Asn-75, Asn-99, Asn-160, Asn-165, and Asn-191. Cysteines 51 and 93 form a disulfide. A disulfide bridge links Cys-132 with Cys-176. A helical membrane pass occupies residues 206-224 (FFIPLLVVILFAVDTGLFI). The Cytoplasmic segment spans residues 225–257 (STQQQVTFLLKIKRTRKGFRLLNPHPKPNPKNN).

Tetramer of an alpha chain, a beta chain, and two disulfide linked gamma chains. Interacts with IGHE (via CH3 region). Expressed in eosinophils.

It localises to the cell membrane. High-affinity receptor for immunoglobulin epsilon/IgE. Mediates IgE effector functions in myeloid cells. Upon IgE binding and antigen/allergen cross-linking initiates signaling pathways that lead to myeloid cell activation and differentiation. On mast cells, basophils and eosinophils stimulates the secretion of vasoactive amines, lipid mediators and cytokines that contribute to inflammatory response, tissue remodeling and cytotoxicity against microbes. Triggers the immediate hypersensitivity response to allergens as a host defense mechanism against helminth parasites, pathogenic bacteria and venom toxicity. When dysregulated, it can elicit harmful life-threatening allergic and anaphylactic reactions. This chain is High affinity immunoglobulin epsilon receptor subunit alpha (FCER1A), found in Homo sapiens (Human).